The chain runs to 480 residues: MGPDTTSERVSEDLMQAVTCLKRVMVGMKSNGTDYVQEQTPSNSTTVICTLVKITGALERCIESNKAMNDVLNGKMKCTTCGATSVGLLSDCHDSATSTTTTVSHRSSEEPPRRKPSAAGGDHDDEELECSSIESRSIRSVSSSVHTSAEDDETNQTMMVPTDVADVINAIVAGTNGSSNSNTTSSSKSPQEEEEEHDLVMKSILSTTTSTSNTKLELSEKLENPLQDTALLDQFLQASLLGQTPTVTPASEENEEDKEQNAVLTSFLQILFANQQAGNAILDAGSSENDGSTSSSQPSPPADPTASLDSLAMFESLLAESMNGNVLDANTSSADQKAAARKRKSTPMKVPKSENGAGYICPMDGCNKVFKEKGSVHRHFVTHIGMRFNCDKCKASYTQKHALMLHQKIHANPDAYQCRGCGTNYTTQNGLRLHRQRNPACMEVSNALEFNTSLNTSISEALSGPLSKNSSPTKQMVSAP.

Disordered regions lie at residues 92–160, 174–198, 282–307, and 328–351; these read CHDS…TMMV, GTNG…EEHD, LDAG…PTAS, and DANT…MKVP. 4 stretches are compositionally biased toward low complexity: residues 95–105, 131–145, 174–187, and 286–296; these read SATSTTTTVSH, SSIE…SSSV, GTNG…TSSS, and SSENDGSTSSS. 2 consecutive C2H2-type zinc fingers follow at residues 359 to 383 and 388 to 410; these read YICP…FVTH and FNCD…QKIH. The C2H2-type 3; degenerate zinc-finger motif lies at 416–441; the sequence is YQCRGCGTNYTTQNGLRLHRQRNPAC. The disordered stretch occupies residues 461–480; the sequence is ALSGPLSKNSSPTKQMVSAP.

Functionally, probable transcription factor, involved in regulation of dopamine neuron lineage specification. May play a role in maintaining robustness of the Wnt/beta-catenin asymmetry pathway. The chain is Zinc finger protein ztf-6 from Caenorhabditis elegans.